A 491-amino-acid polypeptide reads, in one-letter code: Acetyl-coenzyme A carboxylase carboxyl transferase subunit beta, chloroplastic (491 aa).

The CoA carboxyltransferase N-terminal domain maps to 229 to 491; that stretch reads LWVQCENCYG…FQLHGFFPLT (263 aa). Residues Cys233, Cys236, Cys252, and Cys255 each coordinate Zn(2+). The C4-type zinc finger occupies 233–255; the sequence is CENCYGLNYKQFFRSRLNICEHC.

Belongs to the AccD/PCCB family. In terms of assembly, acetyl-CoA carboxylase is a heterohexamer composed of biotin carboxyl carrier protein, biotin carboxylase and 2 subunits each of ACCase subunit alpha and ACCase plastid-coded subunit beta (accD). It depends on Zn(2+) as a cofactor.

The protein localises to the plastid. It localises to the chloroplast stroma. The catalysed reaction is N(6)-carboxybiotinyl-L-lysyl-[protein] + acetyl-CoA = N(6)-biotinyl-L-lysyl-[protein] + malonyl-CoA. It functions in the pathway lipid metabolism; malonyl-CoA biosynthesis; malonyl-CoA from acetyl-CoA: step 1/1. In terms of biological role, component of the acetyl coenzyme A carboxylase (ACC) complex. Biotin carboxylase (BC) catalyzes the carboxylation of biotin on its carrier protein (BCCP) and then the CO(2) group is transferred by the transcarboxylase to acetyl-CoA to form malonyl-CoA. The protein is Acetyl-coenzyme A carboxylase carboxyl transferase subunit beta, chloroplastic of Lemna minor (Common duckweed).